Consider the following 1189-residue polypeptide: Disabled homolog 2-interacting protein (1189 aa).

The disordered stretch occupies residues 1–75; the sequence is MSAGGSARKS…EPSAATPFRV (75 aa). Basic residues predominate over residues 20 to 38; the sequence is LLRRPRLQRQRSRSRSRTR. A compositionally biased stretch (basic and acidic residues) spans 39-49; that stretch reads PARESPQERPG. The 102-residue stretch at 101–202 folds into the PH domain; that stretch reads SFRHILPGFR…WMENLRRAVH (102 aa). The C2 domain maps to 193-311; the sequence is WMENLRRAVH…AGRQFVEKWY (119 aa). Residues 387–595 enclose the Ras-GAP domain; sequence GKVKDFLTDL…TNMQRFLLEI (209 aa). The segment at 646 to 943 is necessary for interaction with AKT1; it reads LRDVHTALST…RTPPNLLSTL (298 aa). Residues 653-668 show a composition bias toward polar residues; it reads LSTPGSGQLPGTNDLA. Disordered stretches follow at residues 653-678 and 715-742; these read LSTPGSGQLPGTNDLASTPGSGSSSI and RSSGVQPSPARSSSYSEANEPDLQMANG. The span at 669–678 shows a compositional bias: low complexity; the sequence is STPGSGSSSI. Polar residues predominate over residues 715 to 731; the sequence is RSSGVQPSPARSSSYSE. The residue at position 728 (S728) is a Phosphoserine; by MAP3K5 and RIPK1. At S747 the chain carries Phosphoserine. Disordered regions lie at residues 803-823, 843-865, 895-998, 1015-1035, and 1164-1189; these read AGQTPTTPGTSEGAPGRPQLL, PRGLGDSGSEGHSSLSSHSNSEE, SLTE…SPNA, EDEGLGPDPPHRDRLRSKDEL, and RNGISPTNPTKLQITENGEFRNSSNC. Residues 852-865 are compositionally biased toward low complexity; that stretch reads EGHSSLSSHSNSEE. A compositionally biased stretch (pro residues) spans 919–931; sequence QPPPPPPPPPPAP. Polar residues-rich tracts occupy residues 938–955 and 966–976; these read NLLSTLQYPRPSSGTLAS and RLRQQSSSSKG. Residues S978 and S995 each carry the phosphoserine modification. The segment covering 1023–1035 has biased composition (basic and acidic residues); it reads PPHRDRLRSKDEL. Residues 1026 to 1159 are a coiled coil; sequence RDRLRSKDEL…SALTQLKERY (134 aa).

As to quaternary structure, on plasma membrane, exists in an inactive form complexed with TNFR1; in response to TNF-alpha, dissociates from TNFR1 complex, translocates to cytoplasm and forms part of an intracellular signaling complex comprising TRADD, RIPK1, TRAF2 and MAP3K5. Interacts with DAB1. Interacts (via NPXY motif) with DAB2 (via PID domain). Interacts (via PH domain) with ERN1. Part of a cytoplasmic complex made of HIPK1, DAB2IP and MAP3K5 in response to TNF-alpha; this complex formation promotes MAP3K5-JNK activation and subsequent apoptosis. Interacts (via N-terminal domain) with JAK2; the interaction occurs in a IFNG/IFN-gamma-dependent manner and inhibits JAK2 autophosphorylation activity. Interacts (via C2 domain) with GSK3B; the interaction stimulates GSK3B kinase activation. Interacts (via C2 domain) with PPP2CA. Interacts (via proline-rich motif) with a regulatory p85 subunit (via SH3 domain) of the PI3K complex; the interaction inhibits the PI3K-AKT complex activity in a TNF-alpha-dependent manner in prostate cancer (PCa) cells. Interacts with AKT1; the interaction is increased in a TNF-alpha-induced manner. Interacts (via C2 domain and active form preferentially) with KDR/VEGFR2 (tyrosine-phosphorylated active form preferentially); the interaction occurs at the late phase of VEGFA response and inhibits KDR/VEGFR2 activity. Interacts (via N-terminus C2 domain) with MAP3K5 ('Ser-966' dephosphorylated form preferentially); the interaction occurs in a TNF-alpha-induced manner. Interacts (via Ras-GAP domain) with the catalytic subunit of protein phosphatase PP2A; the interaction occurs in resting endothelial cells, is further enhanced by TNF-alpha stimulation and is required to bridge PP2A to MAP3K5. Interacts (via C-terminus PER domain) with TRAF2 (via zinc fingers); the interaction occurs in a TNF-alpha-dependent manner. Interacts with 14-3-3 proteins; the interaction occurs in a TNF-alpha-dependent manner. Interacts (via Ras-GAP domain) with RIPK1 (via kinase domain); the interaction occurs in a TNF-alpha-dependent manner. Interacts with RAB40C; acts as a GAP for RAB40C. In response to TNF-alpha-induction, phosphorylated at Ser-728; phosphorylation leads to a conformational change, and thus, increases its association with 14-3-3 proteins, MAP3K5, RIPK1 and TRAF2 in endothelial cells; also stimulates regulatory p85 subunit sequestring and PI3K-p85 complex activity inhibition. Expressed in endothelial and vascular smooth muscle cells (VSMCs). Expressed in prostate epithelial but poorly in prostate cancer cells. Poorly expressed in medulloblastoma cells compared to cerebellar precursor proliferating progenitor cells (at protein level). Low expression in prostate. Down-regulated in prostate cancer.

The protein localises to the cytoplasm. The protein resides in the cell membrane. It localises to the membrane. Its subcellular location is the cell projection. It is found in the dendrite. Functionally, functions as a scaffold protein implicated in the regulation of a large spectrum of both general and specialized signaling pathways. Involved in several processes such as innate immune response, inflammation and cell growth inhibition, apoptosis, cell survival, angiogenesis, cell migration and maturation. Also plays a role in cell cycle checkpoint control; reduces G1 phase cyclin levels resulting in G0/G1 cell cycle arrest. Mediates signal transduction by receptor-mediated inflammatory signals, such as the tumor necrosis factor (TNF), interferon (IFN) or lipopolysaccharide (LPS). Modulates the balance between phosphatidylinositol 3-kinase (PI3K)-AKT-mediated cell survival and apoptosis stimulated kinase (MAP3K5)-JNK signaling pathways; sequesters both AKT1 and MAP3K5 and counterbalances the activity of each kinase by modulating their phosphorylation status in response to pro-inflammatory stimuli. Acts as a regulator of the endoplasmic reticulum (ER) unfolded protein response (UPR) pathway; specifically involved in transduction of the ER stress-response to the JNK cascade through ERN1. Mediates TNF-alpha-induced apoptosis activation by facilitating dissociation of inhibitor 14-3-3 from MAP3K5; recruits the PP2A phosphatase complex which dephosphorylates MAP3K5 on 'Ser-966', leading to the dissociation of 13-3-3 proteins and activation of the MAP3K5-JNK signaling pathway in endothelial cells. Also mediates TNF/TRAF2-induced MAP3K5-JNK activation, while it inhibits CHUK-NF-kappa-B signaling. Acts a negative regulator in the IFN-gamma-mediated JAK-STAT signaling cascade by inhibiting smooth muscle cell (VSMCs) proliferation and intimal expansion, and thus, prevents graft arteriosclerosis (GA). Acts as a GTPase-activating protein (GAP) for the ADP ribosylation factor 6 (ARF6), Ras and RAB40C. Promotes hydrolysis of the ARF6-bound GTP and thus, negatively regulates phosphatidylinositol 4,5-bisphosphate (PIP2)-dependent TLR4-TIRAP-MyD88 and NF-kappa-B signaling pathways in endothelial cells in response to lipopolysaccharides (LPS). Binds specifically to phosphatidylinositol 4-phosphate (PtdIns4P) and phosphatidylinositol 3-phosphate (PtdIns3P). In response to vascular endothelial growth factor (VEGFA), acts as a negative regulator of the VEGFR2-PI3K-mediated angiogenic signaling pathway by inhibiting endothelial cell migration and tube formation. In the developing brain, promotes both the transition from the multipolar to the bipolar stage and the radial migration of cortical neurons from the ventricular zone toward the superficial layer of the neocortex in a glial-dependent locomotion process. Probable downstream effector of the Reelin signaling pathway; promotes Purkinje cell (PC) dendrites development and formation of cerebellar synapses. Also functions as a tumor suppressor protein in prostate cancer progression; prevents cell proliferation and epithelial-to-mesenchymal transition (EMT) through activation of the glycogen synthase kinase-3 beta (GSK3B)-induced beta-catenin and inhibition of PI3K-AKT and Ras-MAPK survival downstream signaling cascades, respectively. This chain is Disabled homolog 2-interacting protein, found in Homo sapiens (Human).